A 104-amino-acid polypeptide reads, in one-letter code: uncharacterized protein (104 aa).

Disordered stretches follow at residues 1 to 48 (MLRR…NNQP) and 66 to 104 (QENT…RRCS).

This is an uncharacterized protein from Saccharomyces cerevisiae (strain ATCC 204508 / S288c) (Baker's yeast).